A 186-amino-acid polypeptide reads, in one-letter code: Hydra actinoporin-like toxin 6 (186 aa).

The signal sequence occupies residues 1 to 21 (MLVYVCLVVILIQLPFGAAGG). The Cell attachment site motif lies at 158-160 (RAG).

This sequence belongs to the actinoporin family. HALT subfamily. In terms of assembly, octamer or nonamer in membranes. Monomer in the soluble state. In vitro, interacts with folate receptor alpha (of target organism). Expressed female germline during oogenesis.

The protein resides in the nematocyst. It is found in the secreted. The protein localises to the target cell membrane. Pore-forming protein that forms hydrophilic pores and causes cytolysis. Compared to equinatoxin-2 (AC P61914), it reveals lower cytolysis activity (5-12-fold difference, tested on erythrocytes), a larger pore size (probably 2-3 nm) and different affinity to membrane lipids (100-fold lower affinity to sphingomyelin). Binds to sulfatides. Shows cytolytic activity on HeLa cells, with a different potency than its paralogs (from most potent to less potent: HALT-4&gt;HALT-6~HALT-1&gt;HALT-3&gt;HALT-7&gt;HALT-2). Pore formation is a multi-step process that involves specific recognition of membrane lipid by a protein aromatic residues rich region, firm binding to the membrane (mainly driven by hydrophobic interactions) accompanied by the transfer of the N-terminal region to the lipid-water interface and finally pore formation after oligomerization of monomers. In vitro, binds to the folate receptor alpha (FOLR1), a GPI-anchored membrane protein that plays a major role in the uptake of folate/folic acid into cells via endocytosis, suggesting a possible involvement of this receptor in the mechanism of HALT-1-induced cell lysis. In vivo, does not cause visible paralysis in larvae of the blowfly Sarcophaga faculata, the most common arthropod prey of Hydra. The polypeptide is Hydra actinoporin-like toxin 6 (Hydra vulgaris (Hydra)).